Here is a 39-residue protein sequence, read N- to C-terminus: Photosystem II reaction center protein J (39 aa).

A helical membrane pass occupies residues 7–27 (IPLWIVAVVAGMGVIAVVGIF).

Belongs to the PsbJ family. In terms of assembly, PSII is composed of 1 copy each of membrane proteins PsbA, PsbB, PsbC, PsbD, PsbE, PsbF, PsbH, PsbI, PsbJ, PsbK, PsbL, PsbM, PsbT, PsbX, PsbY, PsbZ, Psb30/Ycf12, peripheral proteins PsbO, CyanoQ (PsbQ), PsbU, PsbV and a large number of cofactors. It forms dimeric complexes.

It is found in the cellular thylakoid membrane. In terms of biological role, this protein is a component of the reaction center of photosystem II. Functionally, one of the components of the core complex of photosystem II (PSII). PSII is a light-driven water:plastoquinone oxidoreductase that uses light energy to abstract electrons from H(2)O, generating O(2) and a proton gradient subsequently used for ATP formation. It consists of a core antenna complex that captures photons, and an electron transfer chain that converts photonic excitation into a charge separation. The polypeptide is Photosystem II reaction center protein J (Picosynechococcus sp. (strain ATCC 27264 / PCC 7002 / PR-6) (Agmenellum quadruplicatum)).